Consider the following 612-residue polypeptide: 1,8-cineole synthase, chloroplastic (612 aa).

The transit peptide at 1 to 52 directs the protein to the chloroplast; the sequence is MALVCGAPLASRSCLNKSLISSTHELKPLRRTILPTLRWKSATPSINMCLTT. Mg(2+) contacts are provided by aspartate 363, aspartate 367, and aspartate 515. The DDXXD motif motif lies at 363–367; that stretch reads DDIYD.

It belongs to the terpene synthase family. Tpsd subfamily. Mg(2+) serves as cofactor. The cofactor is Mn(2+).

Its subcellular location is the plastid. It localises to the chloroplast. It carries out the reaction (2E)-geranyl diphosphate + H2O = 1,8-cineole + diphosphate. The protein operates within terpene metabolism; oleoresin biosynthesis. Functionally, terpene synthase (TPS) involved in the biosynthesis of monoterpene natural products included in conifer oleoresin secretions and volatile emissions; these compounds contribute to biotic and abiotic stress defense against herbivores and pathogens. Catalyzes the conversion of (2E)-geranyl diphosphate (GPP) to 1,8-cineole. The chain is 1,8-cineole synthase, chloroplastic from Picea glauca (White spruce).